The chain runs to 163 residues: Inorganic pyrophosphatase (163 aa).

Substrate is bound by residues Lys21, Arg35, and Tyr47. Mg(2+)-binding residues include Asp57, Asp62, and Asp94. A substrate-binding site is contributed by Tyr131.

Belongs to the PPase family. In terms of assembly, homohexamer. Mg(2+) serves as cofactor.

Its subcellular location is the cytoplasm. The enzyme catalyses diphosphate + H2O = 2 phosphate + H(+). In terms of biological role, catalyzes the hydrolysis of inorganic pyrophosphate (PPi) forming two phosphate ions. The protein is Inorganic pyrophosphatase of Halalkalibacterium halodurans (strain ATCC BAA-125 / DSM 18197 / FERM 7344 / JCM 9153 / C-125) (Bacillus halodurans).